The chain runs to 201 residues: Ribonuclease HII (201 aa).

Residues 15–201 form the RNase H type-2 domain; sequence QRVAGVDEVG…FRPVRRFLEA (187 aa). The a divalent metal cation site is built by Asp21, Glu22, and Asp113.

The protein belongs to the RNase HII family. Mn(2+) is required as a cofactor. Requires Mg(2+) as cofactor.

It is found in the cytoplasm. It catalyses the reaction Endonucleolytic cleavage to 5'-phosphomonoester.. Functionally, endonuclease that specifically degrades the RNA of RNA-DNA hybrids. In Nitrosococcus oceani (strain ATCC 19707 / BCRC 17464 / JCM 30415 / NCIMB 11848 / C-107), this protein is Ribonuclease HII.